The sequence spans 859 residues: Volume-regulated anion channel subunit LRRC8D (859 aa).

Topologically, residues 1–22 are cytoplasmic; it reads MFTLAEVASLNDIQPTYRILKP. Residues 23–48 form a helical membrane-spanning segment; the sequence is WWDVFMDYLAVVMLMVAIFAGTMQLT. Over 49-164 the chain is Extracellular; the sequence is KDQVVCLPVL…YHLALPWYSK (116 aa). C54 and C355 are disulfide-bonded. Residues 110–138 form a disordered region; it reads IPLQATHPHAESTLPNQEAKKEKRDPTGR. Positions 127–138 are enriched in basic and acidic residues; it reads EAKKEKRDPTGR. A helical transmembrane segment spans residues 165-183; sequence YFPYLALIHTIILMVSSNF. Residues 184–309 lie on the Cytoplasmic side of the membrane; sequence WFKYPKTCSK…EDSDLIYKLY (126 aa). The interval 222–252 is disordered; the sequence is SEENKQRITGAQTLPKHVSTSSDEGSPSAST. Over residues 228–252 the composition is skewed to polar residues; it reads RITGAQTLPKHVSTSSDEGSPSAST. A phosphoserine mark is found at S242, S243, and S247. The helical transmembrane segment at 310–331 threads the bilayer; that stretch reads VVQTLIKTAKFIFILCYTANFV. At 332–361 the chain is on the extracellular side; sequence NAISFEHVCKPKVEHLTGYEVFECTHNMAY. A helical membrane pass occupies residues 362 to 387; sequence MLKKLLISYISIICVYGFICLYTLFW. The Cytoplasmic portion of the chain corresponds to 388 to 859; it reads LFRIPLKEYS…DVNVPFANGI (472 aa). LRR repeat units follow at residues 515–535, 539–560, 562–583, 590–610, 613–633, 637–658, 660–681, 685–706, 708–729, 731–752, 754–775, 777–798, and 800–821; these read NLQE…AFSF, HLRC…VYLL, NLRE…IGLE, HLKI…ITDV, HLTK…NSLK, NVAE…IFSL, NLQE…ISFQ, RLTC…ITHV, NLES…VFSL, KLRC…IGLL, NLQH…LFKC, KLRT…ISQL, and QLTQ…LGQC.

This sequence belongs to the LRRC8 family. In terms of assembly, heterohexamer; oligomerizes with other LRRC8 proteins (LRRC8A, LRRC8B, LRRC8C and/or LRRC8E) to form a heterohexamer. In vivo, the subunit composition may depend primarily on expression levels, and heterooligomeric channels containing various proportions of the different LRRC8 proteins may coexist. As to expression, expressed in pancreatic beta cells. Also expressed in glucagon-secreting pancreatic alpha cells.

It is found in the cell membrane. The protein resides in the endoplasmic reticulum membrane. It catalyses the reaction chloride(in) = chloride(out). It carries out the reaction iodide(out) = iodide(in). The enzyme catalyses taurine(out) = taurine(in). Non-essential component of the volume-regulated anion channel (VRAC, also named VSOAC channel), an anion channel required to maintain a constant cell volume in response to extracellular or intracellular osmotic changes. The VRAC channel conducts iodide better than chloride and can also conduct organic osmolytes like taurine. Plays a redundant role in the efflux of amino acids, such as aspartate, in response to osmotic stress family member (LRRC8B, LRRC8C, LRRC8D or LRRC8E); channel characteristics depend on the precise subunit composition. Also acts as a regulator of glucose-sensing in pancreatic beta cells: VRAC currents, generated in response to hypotonicity- or glucose-induced beta cell swelling, depolarize cells, thereby causing electrical excitation, leading to increase glucose sensitivity and insulin secretion. VRAC channels containing LRRC8D inhibit transport of immunoreactive cyclic dinucleotide GMP-AMP (2'-3'-cGAMP), an immune messenger produced in response to DNA virus in the cytosol. In Mus musculus (Mouse), this protein is Volume-regulated anion channel subunit LRRC8D.